Reading from the N-terminus, the 357-residue chain is Red-sensitive opsin (357 aa).

At 1-49 (MAEQWGKQVFAARRQNEDTTRGSAFTYTNSNHTRDPFEGPNYHIAPRWV) the chain is on the extracellular side. Asn31 carries an N-linked (GlcNAc...) asparagine glycan. Residues 50–74 (YNLATLWMFFVVVLSVFTNGLVLVA) form a helical membrane-spanning segment. The Cytoplasmic segment spans residues 75–86 (TAKFKKLRHPLN). The helical transmembrane segment at 87 to 112 (WILSNLAIADLGETVFASTISVCNQF) threads the bilayer. The Extracellular portion of the chain corresponds to 113–126 (FGYFILGHPMCVFE). A disulfide bond links Cys123 and Cys200. Residues 127–146 (GYVVSTCGIAALWSLTIISW) traverse the membrane as a helical segment. At 147–165 (ERWVVVCKPFGNVKFDAKW) the chain is on the cytoplasmic side. The chain crosses the membrane as a helical span at residues 166–189 (AIGGIVFSWVWSAVWCAPPVFGWS). Topologically, residues 190–215 (RYWPHGLKTSCGPDVFSGSDDPGVQS) are extracellular. The chain crosses the membrane as a helical span at residues 216–243 (YMIVLMITCCIIPLAIIILCYLAVWLAI). Over 244-265 (RAVAMQQKESESTQKAEREVSR) the chain is Cytoplasmic. The chain crosses the membrane as a helical span at residues 266 to 289 (MVVVMIVAYCVCWGPYTFFACFAA). Residues 290 to 297 (ANPGYAFH) are Extracellular-facing. A helical membrane pass occupies residues 298 to 322 (PLAAAMPAYFAKSATIYNPVIYVFM). Lys309 bears the N6-(retinylidene)lysine mark. Over 323 to 357 (NRQFRTCIMQLFGKQVDDGSEVSTSKTEVSSVAPA) the chain is Cytoplasmic.

Belongs to the G-protein coupled receptor 1 family. Opsin subfamily. In terms of processing, phosphorylated on some or all of the serine and threonine residues present in the C-terminal region. In terms of tissue distribution, the color pigments are found in the cone photoreceptor cells.

Its subcellular location is the membrane. Functionally, visual pigments are the light-absorbing molecules that mediate vision. They consist of an apoprotein, opsin, covalently linked to cis-retinal. In Oryzias latipes (Japanese rice fish), this protein is Red-sensitive opsin.